The chain runs to 251 residues: Proteasome subunit alpha type-4-like (251 aa).

This sequence belongs to the peptidase T1A family. In terms of assembly, the 26S proteasome consists of a 20S proteasome core and two 19S regulatory subunits. The 20S proteasome core is composed of 28 subunits that are arranged in four stacked rings, resulting in a barrel-shaped structure. The two end rings are each formed by seven alpha subunits, and the two central rings are each formed by seven beta subunits. The catalytic chamber with the active sites is on the inside of the barrel. As to expression, testis, prominent after meiosis II. After meiosis, predominantly localized to the haploid spermatid nuclei of the 64-cell cysts, remaining during the elongation and condensation of the spermatid nuclei. In mature, motile sperm, expression is seen exclusively in the sperm head.

It localises to the nucleus. Its function is as follows. The proteasome is a multicatalytic proteinase complex which is characterized by its ability to cleave peptides with Arg, Phe, Tyr, Leu, and Glu adjacent to the leaving group at neutral or slightly basic pH. The proteasome has an ATP-dependent proteolytic activity. This chain is Proteasome subunit alpha type-4-like (Prosalpha3T), found in Drosophila melanogaster (Fruit fly).